Here is a 134-residue protein sequence, read N- to C-terminus: FK506-binding protein 2 (134 aa).

A signal peptide spans 1-19 (MRILLLSALFLSLTTLVLS). The 89-residue stretch at 39–127 (GDTVHMHYRG…IFETELVQIE (89 aa)) folds into the PPIase FKBP-type domain. Residues 131–134 (NDEL) carry the Prevents secretion from ER motif.

Belongs to the FKBP-type PPIase family. FKBP2 subfamily.

The protein resides in the endoplasmic reticulum. It carries out the reaction [protein]-peptidylproline (omega=180) = [protein]-peptidylproline (omega=0). With respect to regulation, inhibited by both FK506 and rapamycin. In terms of biological role, PPIases accelerate the folding of proteins. It catalyzes the cis-trans isomerization of proline imidic peptide bonds in oligopeptides. This chain is FK506-binding protein 2 (fpr2), found in Aspergillus fumigatus (strain ATCC MYA-4609 / CBS 101355 / FGSC A1100 / Af293) (Neosartorya fumigata).